A 518-amino-acid polypeptide reads, in one-letter code: Membrane-bound lytic murein transglycosylase F (518 aa).

The signal sequence occupies residues 1–21; the sequence is MKKLKINYLFIGILALLLAVA. Residues 22-269 form a non-LT domain region; sequence LWPSIPWFGK…RIEEKYLGHG (248 aa). The interval 270–518 is LT domain; the sequence is DDFDYVDTRT…SRKGSEEKQN (249 aa). The active site involves E314.

It in the N-terminal section; belongs to the bacterial solute-binding protein 3 family. The protein in the C-terminal section; belongs to the transglycosylase Slt family.

The protein resides in the cell outer membrane. The catalysed reaction is Exolytic cleavage of the (1-&gt;4)-beta-glycosidic linkage between N-acetylmuramic acid (MurNAc) and N-acetylglucosamine (GlcNAc) residues in peptidoglycan, from either the reducing or the non-reducing ends of the peptidoglycan chains, with concomitant formation of a 1,6-anhydrobond in the MurNAc residue.. Murein-degrading enzyme that degrades murein glycan strands and insoluble, high-molecular weight murein sacculi, with the concomitant formation of a 1,6-anhydromuramoyl product. Lytic transglycosylases (LTs) play an integral role in the metabolism of the peptidoglycan (PG) sacculus. Their lytic action creates space within the PG sacculus to allow for its expansion as well as for the insertion of various structures such as secretion systems and flagella. The polypeptide is Membrane-bound lytic murein transglycosylase F (Shigella sonnei (strain Ss046)).